Reading from the N-terminus, the 317-residue chain is Melanocyte-stimulating hormone receptor (317 aa).

The Extracellular portion of the chain corresponds to 1–37 (MPMQGAQRRLLGSLNSTPTATPNLGLAANHTGAPCLE). N-linked (GlcNAc...) asparagine glycosylation is present at asparagine 29. The chain crosses the membrane as a helical span at residues 38-63 (VSIPDGLFLSLGLVSLVENVLVVAAI). Topologically, residues 64 to 72 (AKNRNLHSP) are cytoplasmic. A helical membrane pass occupies residues 73–93 (MYCFICCLALSDLLVSGSNML). Over 94–118 (EMAVILLLEAGALATRASVVQQLQN) the chain is Extracellular. Residues 119-140 (TIDVLTCSSMLCSLCFLGAIAV) traverse the membrane as a helical segment. Over 141 to 163 (DRYVSIFYALRYHSIVTLPRARR) the chain is Cytoplasmic. The helical transmembrane segment at 164–183 (AIAAIWVASVLSSTLFIAYC) threads the bilayer. At 184–191 (DHAAVLLC) the chain is on the extracellular side. The helical transmembrane segment at 192–211 (LVVFFLAMLVLMAVLYVHML) threads the bilayer. Topologically, residues 212 to 240 (ARACQHAQGITRLHKRQLPAHQGFGLRGA) are cytoplasmic. A helical transmembrane segment spans residues 241 to 266 (ATLTILLGIFFLCWGPFFLHLMLVVL). At 267-279 (CPQHLTCSCIFKN) the chain is on the extracellular side. The helical transmembrane segment at 280–300 (FKVFLTLIICNTIIDPLIYAF) threads the bilayer. Over 301-317 (RSQELCRTLREVLLCSW) the chain is Cytoplasmic. Cysteine 315 is lipidated: S-palmitoyl cysteine.

It belongs to the G-protein coupled receptor 1 family. As to quaternary structure, interacts with MGRN1, but does not undergo MGRN1-mediated ubiquitination; this interaction competes with GNAS-binding and thus inhibits agonist-induced cAMP production. Interacts with OPN3; the interaction results in a decrease in MC1R-mediated cAMP signaling and ultimately a decrease in melanin production in melanocytes.

Its subcellular location is the cell membrane. Its function is as follows. Receptor for MSH (alpha, beta and gamma) and ACTH. The activity of this receptor is mediated by G proteins which activate adenylate cyclase. Mediates melanogenesis, the production of eumelanin (black/brown) and phaeomelanin (red/yellow), via regulation of cAMP signaling in melanocytes. This is Melanocyte-stimulating hormone receptor (MC1R) from Alouatta pigra (Guatemalan howler monkey).